Consider the following 353-residue polypeptide: UDP-3-O-acylglucosamine N-acyltransferase (353 aa).

The active-site Proton acceptor is histidine 242.

The protein belongs to the transferase hexapeptide repeat family. LpxD subfamily. Homotrimer.

The enzyme catalyses a UDP-3-O-[(3R)-3-hydroxyacyl]-alpha-D-glucosamine + a (3R)-hydroxyacyl-[ACP] = a UDP-2-N,3-O-bis[(3R)-3-hydroxyacyl]-alpha-D-glucosamine + holo-[ACP] + H(+). It functions in the pathway bacterial outer membrane biogenesis; LPS lipid A biosynthesis. In terms of biological role, catalyzes the N-acylation of UDP-3-O-acylglucosamine using 3-hydroxyacyl-ACP as the acyl donor. Is involved in the biosynthesis of lipid A, a phosphorylated glycolipid that anchors the lipopolysaccharide to the outer membrane of the cell. The protein is UDP-3-O-acylglucosamine N-acyltransferase of Pseudomonas aeruginosa (strain LESB58).